Here is a 361-residue protein sequence, read N- to C-terminus: Alcohol dehydrogenase 9 (361 aa).

Positions 51, 53, 73, 104, 107, 110, 118, and 167 each coordinate Zn(2+). T53 and H73 together coordinate an alcohol. T53 serves as a coordination point for NAD(+). Residues G192–G197, K221, L278–A280, and K356 contribute to the NAD(+) site.

This sequence belongs to the zinc-containing alcohol dehydrogenase family. Class-III subfamily. Homodimer. Zn(2+) is required as a cofactor.

In Catharanthus roseus (Madagascar periwinkle), this protein is Alcohol dehydrogenase 9.